A 92-amino-acid chain; its full sequence is MAKRTKKVGIVGKYGTRYGASLRKMVKKMEITQHSKYTCSFCGKDSMKRAVVGIWSCKRCKRTVAGGAWVYSTTAAASVRSAVRRLRETKEQ.

The segment at 39–60 (CSFCGKDSMKRAVVGIWSCKRC) adopts a C4-type zinc-finger fold.

It belongs to the eukaryotic ribosomal protein eL43 family.

The sequence is that of Large ribosomal subunit protein eL43 (RpL37A) from Drosophila melanogaster (Fruit fly).